A 71-amino-acid chain; its full sequence is uncharacterized protein (71 aa).

This is an uncharacterized protein from Homo sapiens (Human).